Reading from the N-terminus, the 234-residue chain is MTNIRKTHPLLKIVNHSLIDLPAPSNISAWWNFGSLLGLCLMIQILTGLFLAMHYTSDTATAFSSVTHICRDVNYGWLIRYLHANGASMFFICLYMHVGRGIYYGSYTYLETWNIGIILLFAVMATAFMGYVLPWGQMSFWGATVITNLLSAIPYIGTTLVEWIWGGFSVDKATLTRFFAFHFILPFIIAALVMIHLLFLHETGSNNPSGIPSDSDKIPFHPYYTIKDLLGFLV.

The next 4 membrane-spanning stretches (helical) occupy residues 33–53, 77–98, 113–133, and 178–198; these read FGSLLGLCLMIQILTGLFLAM, WLIRYLHANGASMFFICLYMHV, WNIGIILLFAVMATAFMGYVL, and FFAFHFILPFIIAALVMIHLL. Residues H83 and H97 each contribute to the heme b site. 2 residues coordinate heme b: H182 and H196. Residue H201 participates in a ubiquinone binding. Residues 226 to 234 form a helical membrane-spanning segment; it reads IKDLLGFLV.

The protein belongs to the cytochrome b family. As to quaternary structure, the cytochrome bc1 complex contains 11 subunits: 3 respiratory subunits (MT-CYB, CYC1 and UQCRFS1), 2 core proteins (UQCRC1 and UQCRC2) and 6 low-molecular weight proteins (UQCRH/QCR6, UQCRB/QCR7, UQCRQ/QCR8, UQCR10/QCR9, UQCR11/QCR10 and a cleavage product of UQCRFS1). This cytochrome bc1 complex then forms a dimer. The cofactor is heme b.

Its subcellular location is the mitochondrion inner membrane. In terms of biological role, component of the ubiquinol-cytochrome c reductase complex (complex III or cytochrome b-c1 complex) that is part of the mitochondrial respiratory chain. The b-c1 complex mediates electron transfer from ubiquinol to cytochrome c. Contributes to the generation of a proton gradient across the mitochondrial membrane that is then used for ATP synthesis. This Lepus arcticus (Arctic hare) protein is Cytochrome b (MT-CYB).